We begin with the raw amino-acid sequence, 435 residues long: 3-ketoacyl-CoA thiolase (435 aa).

The active-site Acyl-thioester intermediate is the cysteine 98. Active-site proton acceptor residues include histidine 391 and cysteine 421.

The protein belongs to the thiolase-like superfamily. Thiolase family. Heterotetramer of two alpha chains (FadJ) and two beta chains (FadI).

The protein localises to the cytoplasm. It carries out the reaction an acyl-CoA + acetyl-CoA = a 3-oxoacyl-CoA + CoA. Its pathway is lipid metabolism; fatty acid beta-oxidation. Functionally, catalyzes the final step of fatty acid oxidation in which acetyl-CoA is released and the CoA ester of a fatty acid two carbons shorter is formed. The protein is 3-ketoacyl-CoA thiolase of Vibrio cholerae serotype O1 (strain ATCC 39315 / El Tor Inaba N16961).